Here is a 302-residue protein sequence, read N- to C-terminus: Glutamate/aspartate import solute-binding protein (302 aa).

The first 22 residues, 1–22, serve as a signal peptide directing secretion; the sequence is MQLRKPATAILALALSAGLAQA.

It belongs to the bacterial solute-binding protein 3 family. As to quaternary structure, the complex is composed of two ATP-binding proteins (GltL), two transmembrane proteins (GltJ and GltK) and a solute-binding protein (GltI).

It is found in the periplasm. Part of the ABC transporter complex GltIJKL involved in glutamate and aspartate uptake. Binds to both glutamate and aspartate. This is Glutamate/aspartate import solute-binding protein (gltI) from Escherichia coli (strain K12).